We begin with the raw amino-acid sequence, 132 residues long: Vesicle transport protein GOT1A (132 aa).

Topologically, residues 1 to 16 (MISITEWQKIGVGTTG) are cytoplasmic. A helical transmembrane segment spans residues 17-37 (FGIFFILFGMLLYFDSVLLAF). The Lumenal segment spans residues 38–39 (GN). Residues 40-60 (LLFLTGLSLIIGLRRTFSFFF) form a helical membrane-spanning segment. The Cytoplasmic segment spans residues 61 to 68 (QRHKFKGT). A helical membrane pass occupies residues 69–89 (SFFLGGVVIVLLRWPLLGMCL). Over 90–100 (ETYGFFSLFRG) the chain is Lumenal. The chain crosses the membrane as a helical span at residues 101–121 (FFPVAFGFLGSASNIPFLSAL). At 122–132 (FQRLQGTSSMV) the chain is on the cytoplasmic side.

Belongs to the GOT1 family.

It localises to the golgi apparatus membrane. May be involved in fusion of ER-derived transport vesicles with the Golgi complex. This Bos taurus (Bovine) protein is Vesicle transport protein GOT1A.